A 422-amino-acid polypeptide reads, in one-letter code: Phosphoglycerate kinase (422 aa).

Substrate-binding positions include 24-26 (DLN), 64-67 (HLGR), arginine 129, and arginine 171. Residues lysine 222, glycine 309, glutamate 340, and 370-373 (DIDT) contribute to the ATP site.

This sequence belongs to the phosphoglycerate kinase family. Monomer.

The protein resides in the cytoplasm. It catalyses the reaction (2R)-3-phosphoglycerate + ATP = (2R)-3-phospho-glyceroyl phosphate + ADP. It functions in the pathway carbohydrate degradation; glycolysis; pyruvate from D-glyceraldehyde 3-phosphate: step 2/5. This is Phosphoglycerate kinase (pgk) from Ureaplasma parvum serovar 3 (strain ATCC 700970).